The sequence spans 722 residues: Dual specificity tyrosine-phosphorylation-regulated kinase 2 (722 aa).

A Phosphoserine modification is found at Ser-25. The interval 54-127 is disordered; it reads TTTSLNGNGN…SGELKCNTPM (74 aa). The segment covering 66–119 has biased composition (low complexity); sequence GNSNSNNNNNIGSPVSSSTTNSSNGGNERGSSTKSNSSSGSGSSGNSASSTGSG. The Protein kinase domain maps to 198–494; it reads YEILEVIGKG…PDEAAHHEFL (297 aa). ATP is bound by residues 204 to 212 and Lys-227; that span reads IGKGSFGQV. Asp-324 serves as the catalytic Proton acceptor. 2 positions are modified to phosphotyrosine; by autocatalysis: Tyr-356 and Tyr-358. Disordered stretches follow at residues 494 to 519, 557 to 582, 624 to 643, and 679 to 722; these read LQPS…LNSV, TTKS…PDIK, GSGS…LPGT, and TTTH…FGRA. The segment covering 506 to 519 has biased composition (low complexity); it reads RMSSSSSSSGLNSV. The span at 557–576 shows a compositional bias: polar residues; it reads TTKSRQQPPSQSHGHAQSNG. Composition is skewed to low complexity over residues 626–635 and 689–707; these read GSTHHVSSAA and GQQQ…MSHS.

The protein belongs to the protein kinase superfamily. CMGC Ser/Thr protein kinase family. MNB/DYRK subfamily. The cofactor is Mg(2+). In terms of processing, phosphorylated on serine/threonine residues.

It localises to the cytoplasm. It carries out the reaction L-seryl-[protein] + ATP = O-phospho-L-seryl-[protein] + ADP + H(+). The catalysed reaction is L-threonyl-[protein] + ATP = O-phospho-L-threonyl-[protein] + ADP + H(+). It catalyses the reaction L-tyrosyl-[protein] + ATP = O-phospho-L-tyrosyl-[protein] + ADP + H(+). Autophosphorylates on Tyr-356 and Tyr-358. Functionally, in vitro; can phosphorylate exogenous substrates on Ser and Thr residues. May have a physiological role in development being involved in cellular growth and differentiation. The sequence is that of Dual specificity tyrosine-phosphorylation-regulated kinase 2 from Drosophila melanogaster (Fruit fly).